We begin with the raw amino-acid sequence, 650 residues long: Probable acyl-CoA dehydrogenase FadE10 (650 aa).

The segment at 1 to 23 (MAQQTQVTEEQARALAEESRESG) is disordered. The segment covering 10 to 23 (EQARALAEESRESG) has biased composition (basic and acidic residues). The active-site Proton acceptor is the Glu-422.

The protein belongs to the acyl-CoA dehydrogenase family. FAD is required as a cofactor.

The enzyme catalyses a 2,3-saturated acyl-CoA + A = a 2,3-dehydroacyl-CoA + AH2. The chain is Probable acyl-CoA dehydrogenase FadE10 (fadE10) from Mycobacterium tuberculosis (strain CDC 1551 / Oshkosh).